The chain runs to 465 residues: Glutamyl-tRNA reductase 2 (465 aa).

Residues 62–65 (TCNR), Ser-122, 127–129 (EGQ), and Gln-133 each bind substrate. The active-site Nucleophile is the Cys-63. 204–209 (GAGKMG) is an NADP(+) binding site.

The protein belongs to the glutamyl-tRNA reductase family.

Its subcellular location is the plastid. It localises to the chloroplast. The enzyme catalyses (S)-4-amino-5-oxopentanoate + tRNA(Glu) + NADP(+) = L-glutamyl-tRNA(Glu) + NADPH + H(+). It participates in porphyrin-containing compound metabolism; protoporphyrin-IX biosynthesis; 5-aminolevulinate from L-glutamyl-tRNA(Glu): step 1/2. Catalyzes the NADPH-dependent reduction of glutamyl-tRNA(Glu) to glutamate 1-semialdehyde (GSA). This is Glutamyl-tRNA reductase 2 (HEMA2) from Hordeum vulgare (Barley).